The chain runs to 175 residues: Colicin-B immunity protein (175 aa).

3 consecutive transmembrane segments (helical) span residues 14-32, 104-121, and 149-168; these read ILYAFSIIGIIPLMAILIL, CFWGPVFYAILIYITLFY, and IYFTVLTMTYAILLMPLLVI.

It localises to the cell inner membrane. Functionally, this protein is able to protect a cell, which harbors the plasmid ColB encoding colicin B, against colicin B. The chain is Colicin-B immunity protein (cbi) from Escherichia coli.